The chain runs to 316 residues: uncharacterized protein (316 aa).

Belongs to the asfivirus F317L family.

The protein localises to the virion. This is an uncharacterized protein from Ornithodoros (relapsing fever ticks).